A 93-amino-acid chain; its full sequence is MPRLSEAEIAEQLAQRPDWSLENNEIVRTFRLANFPAAIAFVTHVAFLAEAAGHHPDIDIRYNRVRLALTTHDAGGLTEKDFALAAAIDEIMG.

Belongs to the pterin-4-alpha-carbinolamine dehydratase family.

The enzyme catalyses (4aS,6R)-4a-hydroxy-L-erythro-5,6,7,8-tetrahydrobiopterin = (6R)-L-erythro-6,7-dihydrobiopterin + H2O. This Chloroflexus aurantiacus (strain ATCC 29366 / DSM 635 / J-10-fl) protein is Putative pterin-4-alpha-carbinolamine dehydratase.